Here is a 165-residue protein sequence, read N- to C-terminus: Cytochrome c-type biogenesis protein CcmE (165 aa).

Over Met1 to Arg7 the chain is Cytoplasmic. Residues Leu8 to Ala28 form a helical; Signal-anchor for type II membrane protein membrane-spanning segment. The Periplasmic segment spans residues Phe29–Lys165. Residues His123 and Tyr127 each contribute to the heme site. Residues Asp138 to Lys165 form a disordered region. Over residues Gly145 to Gly158 the composition is skewed to low complexity.

The protein belongs to the CcmE/CycJ family.

Its subcellular location is the cell inner membrane. Functionally, heme chaperone required for the biogenesis of c-type cytochromes. Transiently binds heme delivered by CcmC and transfers the heme to apo-cytochromes in a process facilitated by CcmF and CcmH. This Agrobacterium fabrum (strain C58 / ATCC 33970) (Agrobacterium tumefaciens (strain C58)) protein is Cytochrome c-type biogenesis protein CcmE.